The chain runs to 377 residues: Chaperone protein DnaJ (377 aa).

Residues 5 to 69 form the J domain; it reads EYYDRLGLSK…QKRAAYDQYG (65 aa). The CR-type zinc-finger motif lies at 133-215; the sequence is GAEKEIHYNR…CHGTGREKQS (83 aa). Residues Cys-146, Cys-149, Cys-163, Cys-166, Cys-189, Cys-192, Cys-203, and Cys-206 each contribute to the Zn(2+) site. 4 CXXCXGXG motif repeats span residues 146–153, 163–170, 189–196, and 203–210; these read CKTCSGSG, CGRCHGHG, CDVCHGTG, and CQTCHGTG.

Belongs to the DnaJ family. As to quaternary structure, homodimer. The cofactor is Zn(2+).

It is found in the cytoplasm. Functionally, participates actively in the response to hyperosmotic and heat shock by preventing the aggregation of stress-denatured proteins and by disaggregating proteins, also in an autonomous, DnaK-independent fashion. Unfolded proteins bind initially to DnaJ; upon interaction with the DnaJ-bound protein, DnaK hydrolyzes its bound ATP, resulting in the formation of a stable complex. GrpE releases ADP from DnaK; ATP binding to DnaK triggers the release of the substrate protein, thus completing the reaction cycle. Several rounds of ATP-dependent interactions between DnaJ, DnaK and GrpE are required for fully efficient folding. Also involved, together with DnaK and GrpE, in the DNA replication of plasmids through activation of initiation proteins. This chain is Chaperone protein DnaJ, found in Streptococcus thermophilus (strain CNRZ 1066).